A 108-amino-acid chain; its full sequence is Replication restart protein PriB (108 aa).

In terms of domain architecture, SSB spans 8–108 (VDNRFSLIGK…LHAEQIEFIE (101 aa)).

Belongs to the PriB family. In terms of assembly, homodimer. Interacts with PriA and DnaT. Component of the replication restart primosome. Primosome assembly occurs via a 'hand-off' mechanism. PriA binds to replication forks, subsequently PriB then DnaT bind; DnaT then displaces ssDNA to generate the helicase loading substrate.

Functionally, involved in the restart of stalled replication forks, which reloads the replicative helicase on sites other than the origin of replication; the PriA-PriB pathway is the major replication restart pathway. During primosome assembly it facilitates complex formation between PriA and DnaT on DNA; stabilizes PriA on DNA. Stimulates the DNA unwinding activity of PriA helicase. This chain is Replication restart protein PriB, found in Histophilus somni (strain 2336) (Haemophilus somnus).